Reading from the N-terminus, the 263-residue chain is Calpain small subunit 1 (263 aa).

An N-acetylmethionine modification is found at methionine 1. Serine 6 carries the post-translational modification Phosphoserine. In terms of domain architecture, EF-hand 1; atypical spans 91–125 (EEVRQFRRLFAQLAGDDMEVSATELMNILNKVVTR). Alanine 104, aspartate 107, glutamate 109, glutamate 114, aspartate 132, aspartate 147, aspartate 149, threonine 151, lysine 153, and glutamate 158 together coordinate Ca(2+). 4 EF-hand domains span residues 134–167 (FGID…NNIK), 164–199 (NNIK…AGFR), 200–228 (LNEH…ISCL), and 229–263 (VRLD…TMYS). Residue lysine 174 is modified to N6-acetyllysine. Ca(2+) is bound by residues aspartate 177, aspartate 179, serine 181, threonine 183, glutamate 188, and aspartate 220.

As to quaternary structure, homodimer or heterodimer of a large (catalytic) and a small (regulatory) subunit. In presence of calcium, the heterodimer dissociates.

The protein resides in the cytoplasm. It is found in the cell membrane. Regulatory subunit of the calcium-regulated non-lysosomal thiol-protease which catalyzes limited proteolysis of substrates involved in cytoskeletal remodeling and signal transduction. Essential for embryonic development. This is Calpain small subunit 1 (CAPNS1) from Bos taurus (Bovine).